Reading from the N-terminus, the 313-residue chain is Uracil-DNA glycosylase (313 aa).

A compositionally biased stretch (polar residues) spans 1–12 (MIGQKTLYSFFS). The interval 1–25 (MIGQKTLYSFFSPSPARKRHAPSPE) is interaction with FAM72A. A mitochondrial localization signal region spans residues 1-29 (MIGQKTLYSFFSPSPARKRHAPSPEPAVQ). Residues 1–68 (MIGQKTLYSF…GTPPSSPLSA (68 aa)) are disordered. Residues S12 and S14 each carry the phosphoserine modification. Positions 17–19 (RKR) match the Important for nuclear sorting motif. S23 carries the phosphoserine modification. Positions 43–53 (AAAIPAKKAPA) are enriched in low complexity. A Phosphothreonine modification is found at T60. Phosphoserine is present on S64. The interval 73–88 (RIQRNKAAALLRLAAR) is interaction with RPA2. Q153 provides a ligand contact to uracil. The Proton acceptor role is filled by D154. H157 contributes to the dsDNA binding site. F167 serves as a coordination point for uracil. S178 contacts dsDNA. Uracil is bound at residue N213. Positions 256, 277, 279, 282, and 285 each coordinate dsDNA. A uracil-binding site is contributed by H277. Residue K295 is modified to N6-acetyllysine.

Belongs to the uracil-DNA glycosylase (UDG) superfamily. UNG family. In terms of assembly, monomer. Interacts with RPA2 subunit of the RPA trimer; this interaction mediates UNG2 recruitment to RPA-coated single-stranded DNA at stalled replication forks. Interacts with PCNA; this interaction mediates UNG2 recruitment to S-phase replication foci. Interacts (via N-terminus) with FAM72A. As to quaternary structure, (Microbial infection) Interacts with HIV-1 Vpr. In terms of processing, processed by mitochondrial serine or cysteine peptidases to yield a mature dominant form that lacks N-terminal 29 amino acid residues and another minor form that lacks N-terminal 77 amino acid residues. The catalytic activity of UNG1 delta29 is not product-inhibited by AP sites.

It localises to the mitochondrion. The protein localises to the nucleus. It carries out the reaction Hydrolyzes single-stranded DNA or mismatched double-stranded DNA and polynucleotides, releasing free uracil.. It catalyses the reaction a 2'-deoxyuridine in single-stranded DNA + H2O = a 2'-deoxyribose 5'-monophosphate in single-stranded DNA + uracil. The enzyme catalyses a 2'-deoxyuridine in double-stranded DNA + H2O = a 2'-deoxyribose 5'-monophosphate in double-stranded DNA + uracil. Functionally, uracil-DNA glycosylase that hydrolyzes the N-glycosidic bond between uracil and deoxyribose in single- and double-stranded DNA (ssDNA and dsDNA) to release a free uracil residue and form an abasic (apurinic/apyrimidinic; AP) site. Excises uracil residues arising as a result of misincorporation of dUMP residues by DNA polymerase during replication or due to spontaneous or enzymatic deamination of cytosine. Mediates error-free base excision repair (BER) of uracil at replication forks. According to the model, it is recruited by PCNA to S-phase replication forks to remove misincorporated uracil at U:A base mispairs in nascent DNA strands. Via trimeric RPA it is recruited to ssDNA stretches ahead of the polymerase to allow detection and excision of deaminated cytosines prior to replication. The resultant AP sites temporarily stall replication, allowing time to repair the lesion. Mediates mutagenic uracil processing involved in antibody affinity maturation. Processes AICDA-induced U:G base mispairs at variable immunoglobulin (Ig) regions leading to the generation of transversion mutations. Operates at switch sites of Ig constant regions where it mediates Ig isotype class switch recombination. Excises AICDA-induced uracil residues forming AP sites that are subsequently nicked by APEX1 endonuclease. The accumulation of staggered nicks in opposite strands results in double strand DNA breaks that are finally resolved via non-homologous end joining repair pathway. This is Uracil-DNA glycosylase from Homo sapiens (Human).